Reading from the N-terminus, the 461-residue chain is Argininosuccinate lyase (461 aa).

The protein belongs to the lyase 1 family. Argininosuccinate lyase subfamily.

The protein resides in the cytoplasm. It carries out the reaction 2-(N(omega)-L-arginino)succinate = fumarate + L-arginine. It participates in amino-acid biosynthesis; L-arginine biosynthesis; L-arginine from L-ornithine and carbamoyl phosphate: step 3/3. The sequence is that of Argininosuccinate lyase from Trichormus variabilis (strain ATCC 29413 / PCC 7937) (Anabaena variabilis).